We begin with the raw amino-acid sequence, 530 residues long: MPIPAPHGGKLQDLVIRDSSIRSDLFKEIADKKYKTLTLSPRQLCDLELILNGGFSPLTGFLNEEDYNSVVHDMRLSSVKNEKNGKGLLWSMPITLDVGQEFAGKLSKGEKIVLKDLRDEKPLALLTVETVYKPNKQTEAEKVFRGDPEHPAIKYLFETAQEFYVGGSIQGLDYPTHYDYIPFRKTPTELREEFSKLGWDQQKVVAFQTRNPMHRAHRELTVRAANDLGSDGHILIHPVVGLTKPGDIDHHTRVRVYQQILKKYPDGLATLSLLPLAMRMGGDREAMWHSLIRMNYGVDHFIVGRDHAGPGSNSKGVDFYGPYDAQELLAKYKDELEPKIKVVPFRMVTYLPDEDRYAPIDTIDTSKVNTANISGTELRQRLRDGTEIPGWFSYPEVVKVLRESNPPRSKQGFAIVIDSSDSKQGEYLSFALQSTLNQFSGERRITKLSSEQATPFIVNELVKSGSGVIVPTKSNQSDIIKAVGSGNSIIVNFNGEQNADQGIFSLKEDLTSVIGEIVEYLVSQGFYQQS.

Residues Met-1–Tyr-178 are N-terminal. The catalytic stretch occupies residues Asp-179 to Lys-410. Gln-208 contacts sulfate. ATP-binding positions include Gln-208 to Asn-211 and Gly-304 to His-307. Residues Thr-209, Arg-210, and Asn-211 contribute to the active site. Residue Arg-210 participates in sulfate binding. Residue Ala-308 participates in sulfate binding. Val-348 serves as a coordination point for ATP. Positions Gln-411–Ser-530 are required for oligomerization; adenylyl-sulfate kinase-like.

The protein belongs to the sulfate adenylyltransferase family. Homohexamer. Dimer of trimers.

The protein resides in the cytoplasm. It catalyses the reaction sulfate + ATP + H(+) = adenosine 5'-phosphosulfate + diphosphate. Its pathway is sulfur metabolism; hydrogen sulfide biosynthesis; sulfite from sulfate: step 1/3. Catalyzes the first intracellular reaction of sulfate assimilation, forming adenosine-5'-phosphosulfate (APS) from inorganic sulfate and ATP. Plays an important role in sulfate activation as a component of the biosynthesis pathway of sulfur-containing amino acids. The sequence is that of Sulfate adenylyltransferase from Debaryomyces hansenii (strain ATCC 36239 / CBS 767 / BCRC 21394 / JCM 1990 / NBRC 0083 / IGC 2968) (Yeast).